A 462-amino-acid chain; its full sequence is Bifunctional protein GlmU (462 aa).

The segment at 1–230 is pyrophosphorylase; sequence MVNKNAIILA…FEESMGVNDR (230 aa). UDP-N-acetyl-alpha-D-glucosamine contacts are provided by residues 9–12, K23, Q73, 78–79, 101–103, G140, E155, N170, and N228; these read LAAG, GT, and SGD. D103 is a Mg(2+) binding site. N228 contributes to the Mg(2+) binding site. The tract at residues 231-251 is linker; the sequence is VALSQATKVMRQRINTAHMRN. The segment at 252–462 is N-acetyltransferase; sequence GVTLIDPEST…LPVAKDEEWQ (211 aa). Residues R333 and K351 each coordinate UDP-N-acetyl-alpha-D-glucosamine. The active-site Proton acceptor is the H363. The UDP-N-acetyl-alpha-D-glucosamine site is built by Y366 and N377. Residues 386–387, S405, A423, and R440 each bind acetyl-CoA; that span reads NY.

It in the N-terminal section; belongs to the N-acetylglucosamine-1-phosphate uridyltransferase family. In the C-terminal section; belongs to the transferase hexapeptide repeat family. Homotrimer. The cofactor is Mg(2+).

Its subcellular location is the cytoplasm. It carries out the reaction alpha-D-glucosamine 1-phosphate + acetyl-CoA = N-acetyl-alpha-D-glucosamine 1-phosphate + CoA + H(+). The catalysed reaction is N-acetyl-alpha-D-glucosamine 1-phosphate + UTP + H(+) = UDP-N-acetyl-alpha-D-glucosamine + diphosphate. Its pathway is nucleotide-sugar biosynthesis; UDP-N-acetyl-alpha-D-glucosamine biosynthesis; N-acetyl-alpha-D-glucosamine 1-phosphate from alpha-D-glucosamine 6-phosphate (route II): step 2/2. It participates in nucleotide-sugar biosynthesis; UDP-N-acetyl-alpha-D-glucosamine biosynthesis; UDP-N-acetyl-alpha-D-glucosamine from N-acetyl-alpha-D-glucosamine 1-phosphate: step 1/1. The protein operates within bacterial outer membrane biogenesis; LPS lipid A biosynthesis. In terms of biological role, catalyzes the last two sequential reactions in the de novo biosynthetic pathway for UDP-N-acetylglucosamine (UDP-GlcNAc). The C-terminal domain catalyzes the transfer of acetyl group from acetyl coenzyme A to glucosamine-1-phosphate (GlcN-1-P) to produce N-acetylglucosamine-1-phosphate (GlcNAc-1-P), which is converted into UDP-GlcNAc by the transfer of uridine 5-monophosphate (from uridine 5-triphosphate), a reaction catalyzed by the N-terminal domain. This is Bifunctional protein GlmU from Latilactobacillus sakei subsp. sakei (strain 23K) (Lactobacillus sakei subsp. sakei).